We begin with the raw amino-acid sequence, 323 residues long: Aspartate carbamoyltransferase catalytic subunit (323 aa).

The carbamoyl phosphate site is built by Arg-71 and Thr-72. An L-aspartate-binding site is contributed by Lys-99. Carbamoyl phosphate-binding residues include Arg-121, His-151, and Gln-154. The L-aspartate site is built by Arg-184 and Arg-239. Carbamoyl phosphate-binding residues include Gly-280 and Pro-281.

The protein belongs to the aspartate/ornithine carbamoyltransferase superfamily. ATCase family. As to quaternary structure, heterododecamer (2C3:3R2) of six catalytic PyrB chains organized as two trimers (C3), and six regulatory PyrI chains organized as three dimers (R2).

It carries out the reaction carbamoyl phosphate + L-aspartate = N-carbamoyl-L-aspartate + phosphate + H(+). The protein operates within pyrimidine metabolism; UMP biosynthesis via de novo pathway; (S)-dihydroorotate from bicarbonate: step 2/3. Its function is as follows. Catalyzes the condensation of carbamoyl phosphate and aspartate to form carbamoyl aspartate and inorganic phosphate, the committed step in the de novo pyrimidine nucleotide biosynthesis pathway. The polypeptide is Aspartate carbamoyltransferase catalytic subunit (Cupriavidus metallidurans (strain ATCC 43123 / DSM 2839 / NBRC 102507 / CH34) (Ralstonia metallidurans)).